We begin with the raw amino-acid sequence, 364 residues long: Geranylfarnesyl diphosphate synthase, chloroplastic (364 aa).

A chloroplast-targeting transit peptide spans 1 to 51 (MSHCTIFLYKYFPGKPRYQHCSFLHPLNHKLKSLFLPITGSRFLSNSTFSV). 3 residues coordinate isopentenyl diphosphate: K72, K111, and H143. Mg(2+) contacts are provided by D150 and D156. Position 161 (R161) interacts with dimethylallyl diphosphate. R162 lines the isopentenyl diphosphate pocket. Dimethylallyl diphosphate contacts are provided by K249, T250, Q287, D294, K304, and K314.

The protein belongs to the FPP/GGPP synthase family. As to quaternary structure, monomer. The cofactor is Mg(2+). Strongly expressed in glandular trichomes, and, at low levels, in leaves, stems and flowers.

Its subcellular location is the plastid. It is found in the chloroplast. It catalyses the reaction isopentenyl diphosphate + (2E,6E,10E)-geranylgeranyl diphosphate = (2E,6E,10E,14E)-geranylfarnesyl diphosphate + diphosphate. It carries out the reaction 2 isopentenyl diphosphate + (2E,6E)-farnesyl diphosphate = (2E,6E,10E,14E)-geranylfarnesyl diphosphate + 2 diphosphate. The catalysed reaction is 3 isopentenyl diphosphate + (2E)-geranyl diphosphate = (2E,6E,10E,14E)-geranylfarnesyl diphosphate + 3 diphosphate. The enzyme catalyses 4 isopentenyl diphosphate + dimethylallyl diphosphate = (2E,6E,10E,14E)-geranylfarnesyl diphosphate + 4 diphosphate. The protein operates within secondary metabolite biosynthesis; terpenoid biosynthesis. It participates in isoprenoid biosynthesis. In terms of biological role, involved in the biosynthesis of leucosceptrane sesterterpenoids natural products, which are playing defensive roles toward herbivorus insects (e.g. Spodoptera exigua). Catalyzes the condensation of isopentenyl pyrophosphate (IDP) with the allylic pyrophosphates to yield geranylfarnesyl diphosphate (GFDP), the C(25) prenyl diphosphate precursor to all sesterterpenoids. Geranylgeranyl diphosphate (GGPP) is the preferred substrate, however dimethylallyl diphosphate (DMADP), farnesyl diphosphate (FDP) and geranyl diphosphate (GDP) can also be used as allylic substrate. This Leucosceptrum canum (Hairy white-wand) protein is Geranylfarnesyl diphosphate synthase, chloroplastic.